The following is a 143-amino-acid chain: Large ribosomal subunit protein uL15 (143 aa).

Residues 1-54 (MELNSIKPADGAKHAARRVGRGIGSGLGKTAGRGHKGQKSRSGGYHKVGFEGGQ) form a disordered region. Gly residues predominate over residues 21–31 (RGIGSGLGKTA).

This sequence belongs to the universal ribosomal protein uL15 family. As to quaternary structure, part of the 50S ribosomal subunit.

Functionally, binds to the 23S rRNA. The protein is Large ribosomal subunit protein uL15 of Acidovorax ebreus (strain TPSY) (Diaphorobacter sp. (strain TPSY)).